The chain runs to 255 residues: D-aminoacyl-tRNA deacylase (255 aa).

The protein belongs to the DtdA deacylase family. As to quaternary structure, monomer. Zn(2+) serves as cofactor.

It carries out the reaction a D-aminoacyl-tRNA + H2O = a tRNA + a D-alpha-amino acid + H(+). The catalysed reaction is glycyl-tRNA(Ala) + H2O = tRNA(Ala) + glycine + H(+). Functionally, D-aminoacyl-tRNA deacylase with broad substrate specificity. By recycling D-aminoacyl-tRNA to D-amino acids and free tRNA molecules, this enzyme counteracts the toxicity associated with the formation of D-aminoacyl-tRNA entities in vivo. This chain is D-aminoacyl-tRNA deacylase, found in Picrophilus torridus (strain ATCC 700027 / DSM 9790 / JCM 10055 / NBRC 100828 / KAW 2/3).